Reading from the N-terminus, the 385-residue chain is Bifunctional chorismate mutase/prephenate dehydratase (385 aa).

Positions Met1 to Leu92 constitute a Chorismate mutase domain. Positions 11, 28, 39, 48, 52, 84, and 88 each coordinate substrate. The Prephenate dehydratase domain occupies Asn105–Arg285. The interval Asn286–Pro385 is regulatory. Residues Thr299–Pro376 form the ACT domain.

The protein localises to the cytoplasm. It carries out the reaction chorismate = prephenate. It catalyses the reaction prephenate + H(+) = 3-phenylpyruvate + CO2 + H2O. It functions in the pathway amino-acid biosynthesis; L-phenylalanine biosynthesis; phenylpyruvate from prephenate: step 1/1. Its pathway is metabolic intermediate biosynthesis; prephenate biosynthesis; prephenate from chorismate: step 1/1. In terms of biological role, catalyzes the Claisen rearrangement of chorismate to prephenate and the decarboxylation/dehydration of prephenate to phenylpyruvate. The chain is Bifunctional chorismate mutase/prephenate dehydratase (pheA) from Buchnera aphidicola subsp. Acyrthosiphon pisum (strain APS) (Acyrthosiphon pisum symbiotic bacterium).